Reading from the N-terminus, the 150-residue chain is Histone H2A.1 (150 aa).

Position 1 is an N-acetylmethionine (methionine 1). 2 stretches are compositionally biased toward basic residues: residues 1 to 24 (MDAS…KKSV) and 141 to 150 (SKAKKSPKKA). 2 disordered regions span residues 1–26 (MDAS…SVTR) and 128–150 (RKEN…PKKA). 2 consecutive short sequence motifs (SPKK motif) follow at residues 139–142 (SPSK) and 146–149 (SPKK).

Belongs to the histone H2A family. The nucleosome is a histone octamer containing two molecules each of H2A, H2B, H3 and H4 assembled in one H3-H4 heterotetramer and two H2A-H2B heterodimers. The octamer wraps approximately 147 bp of DNA. In terms of tissue distribution, high expression in root meristematic tissues, moderate in whole shoot and very low in mature leaves.

It is found in the nucleus. It localises to the chromosome. Functionally, core component of nucleosome. Nucleosomes wrap and compact DNA into chromatin, limiting DNA accessibility to the cellular machineries which require DNA as a template. Histones thereby play a central role in transcription regulation, DNA repair, DNA replication and chromosomal stability. DNA accessibility is regulated via a complex set of post-translational modifications of histones, also called histone code, and nucleosome remodeling. In Pisum sativum (Garden pea), this protein is Histone H2A.1.